We begin with the raw amino-acid sequence, 92 residues long: MPKLEMMLLVLLILPLSYFSAAGGQVVQGDLHSDVLARYLQRGDRDARECQVNTPGSRWGKCCLNRMCGPMCCPESHCYCIYHRRRGHGCSC.

The N-terminal stretch at 1–24 (MPKLEMMLLVLLILPLSYFSAAGG) is a signal peptide. A propeptide spanning residues 25–45 (QVVQGDLHSDVLARYLQRGDR) is cleaved from the precursor. Glu49 carries the 4-carboxyglutamate modification. Pro55 bears the 4-hydroxyproline mark. 4 disulfides stabilise this stretch: Cys63–Cys72, Cys68–Cys80, Cys73–Cys90, and Cys78–Cys92.

Belongs to the conotoxin D superfamily. In terms of assembly, hetero-, homo- or pseudo-homodimer (identical sequence, different post-translational modifications). Expressed by the venom duct.

Its subcellular location is the secreted. In terms of biological role, alpha-conotoxins act on postsynaptic membranes, they bind to the nicotinic acetylcholine receptors (nAChR) and thus inhibit them. Through its two C-terminal domains, this homodimeric protein would bind to two nAChR allosteric sites, located outside the nAChR C-loop of the principal binding face and at the adjacent binding interface in a clockwise direction. This toxin specifically blocks mammalian neuronal nAChR of the alpha-7/CHRNA7, alpha-3-beta-2/CHRNA3-CHRNB2 and alpha-4-beta-2/CHRNA4-CHRNB2 subtypes. The polypeptide is Alpha-conotoxin-like Rt20.2 (Conus rattus (Rat cone)).